Consider the following 195-residue polypeptide: Alkyl hydroperoxide reductase C (195 aa).

A Thioredoxin domain is found at 4–170; sequence LTIGDQFPEY…VLRVLDALQS (167 aa). Lys-41 participates in a covalent cross-link: Isoglutamyl lysine isopeptide (Lys-Gln) (interchain with Q-Cter in protein Pup). Cys-61 functions as the Cysteine sulfenic acid (-SOH) intermediate in the catalytic mechanism.

This sequence belongs to the peroxiredoxin family. AhpC/Prx1 subfamily. Homodimer; disulfide-linked, upon oxidation. 6 homodimers assemble to form a ring-like dodecamer. Identified in a complex with AhpD, DlaT and Lpd.

It is found in the cytoplasm. The enzyme catalyses N(6)-[(R)-dihydrolipoyl]-L-lysyl-[lipoyl-carrier protein] + a hydroperoxide = N(6)-[(R)-lipoyl]-L-lysyl-[lipoyl-carrier protein] + an alcohol + H2O. Functionally, thiol-specific peroxidase that catalyzes the reduction of hydrogen peroxide and organic hydroperoxides to water and alcohols, respectively. Plays a role in cell protection against oxidative stress by detoxifying peroxides. Together with AhpD, DlaT and Lpd, constitutes an NADH-dependent peroxidase active against hydrogen and alkyl peroxides as well as serving as a peroxynitrite reductase, thus protecting the bacterium against reactive nitrogen intermediates and oxidative stress generated by the host immune system. Does not however seem to play a role in detoxification of isoniazid. The polypeptide is Alkyl hydroperoxide reductase C (Mycolicibacterium smegmatis (strain ATCC 700084 / mc(2)155) (Mycobacterium smegmatis)).